The chain runs to 414 residues: Histidinol dehydrogenase (414 aa).

Y116, Q177, and N200 together coordinate NAD(+). Residues T223, Q245, and H248 each contribute to the substrate site. 2 residues coordinate Zn(2+): Q245 and H248. Catalysis depends on proton acceptor residues E313 and H314. 4 residues coordinate substrate: H314, D347, E401, and H406. Residue D347 participates in Zn(2+) binding. H406 is a binding site for Zn(2+).

Belongs to the histidinol dehydrogenase family. Zn(2+) is required as a cofactor.

The catalysed reaction is L-histidinol + 2 NAD(+) + H2O = L-histidine + 2 NADH + 3 H(+). It participates in amino-acid biosynthesis; L-histidine biosynthesis; L-histidine from 5-phospho-alpha-D-ribose 1-diphosphate: step 9/9. Its function is as follows. Catalyzes the sequential NAD-dependent oxidations of L-histidinol to L-histidinaldehyde and then to L-histidine. This chain is Histidinol dehydrogenase, found in Staphylococcus epidermidis (strain ATCC 35984 / DSM 28319 / BCRC 17069 / CCUG 31568 / BM 3577 / RP62A).